The primary structure comprises 350 residues: Phosphoribosylformylglycinamidine cyclo-ligase (350 aa).

It belongs to the AIR synthase family.

It localises to the cytoplasm. It catalyses the reaction 2-formamido-N(1)-(5-O-phospho-beta-D-ribosyl)acetamidine + ATP = 5-amino-1-(5-phospho-beta-D-ribosyl)imidazole + ADP + phosphate + H(+). It functions in the pathway purine metabolism; IMP biosynthesis via de novo pathway; 5-amino-1-(5-phospho-D-ribosyl)imidazole from N(2)-formyl-N(1)-(5-phospho-D-ribosyl)glycinamide: step 2/2. The chain is Phosphoribosylformylglycinamidine cyclo-ligase from Pseudoalteromonas translucida (strain TAC 125).